The chain runs to 460 residues: Cysteine--tRNA ligase (460 aa).

Position 28 (Cys28) interacts with Zn(2+). Residues 30-40 (MTVYDYCHLGH) carry the 'HIGH' region motif. Residues Cys209, His234, and Glu238 each contribute to the Zn(2+) site. The 'KMSKS' region motif lies at 266 to 270 (KMSKS). Lys269 lines the ATP pocket.

The protein belongs to the class-I aminoacyl-tRNA synthetase family. As to quaternary structure, monomer. Zn(2+) serves as cofactor.

The protein resides in the cytoplasm. The enzyme catalyses tRNA(Cys) + L-cysteine + ATP = L-cysteinyl-tRNA(Cys) + AMP + diphosphate. The protein is Cysteine--tRNA ligase of Pseudomonas paraeruginosa (strain DSM 24068 / PA7) (Pseudomonas aeruginosa (strain PA7)).